A 285-amino-acid chain; its full sequence is 4-hydroxybenzoate octaprenyltransferase (285 aa).

8 helical membrane-spanning segments follow: residues 28-48, 86-106, 110-130, 133-153, 165-185, 210-230, 232-252, and 262-284; these read LWAM…WIFV, IAAW…FALV, NALT…YPFF, FFAI…PMAF, WLML…YAMV, IMLC…LLGL, WPYW…YTLI, and AAFR…AYAI.

The protein belongs to the UbiA prenyltransferase family. It depends on Mg(2+) as a cofactor.

It localises to the cell inner membrane. The enzyme catalyses all-trans-octaprenyl diphosphate + 4-hydroxybenzoate = 4-hydroxy-3-(all-trans-octaprenyl)benzoate + diphosphate. It functions in the pathway cofactor biosynthesis; ubiquinone biosynthesis. Its function is as follows. Catalyzes the prenylation of para-hydroxybenzoate (PHB) with an all-trans polyprenyl group. Mediates the second step in the final reaction sequence of ubiquinone-8 (UQ-8) biosynthesis, which is the condensation of the polyisoprenoid side chain with PHB, generating the first membrane-bound Q intermediate 3-octaprenyl-4-hydroxybenzoate. The polypeptide is 4-hydroxybenzoate octaprenyltransferase (Cupriavidus necator (strain ATCC 17699 / DSM 428 / KCTC 22496 / NCIMB 10442 / H16 / Stanier 337) (Ralstonia eutropha)).